The chain runs to 89 residues: uncharacterized protein (89 aa).

A helical transmembrane segment spans residues 39–61; the sequence is FVCFWSIWFWTGDISFSLLSMLV.

The protein localises to the membrane. This is an uncharacterized protein from Saccharomyces cerevisiae (strain ATCC 204508 / S288c) (Baker's yeast).